The primary structure comprises 333 residues: Ubiquinol oxidase 2, mitochondrial (333 aa).

A helical membrane pass occupies residues 158–178; the sequence is AMMLETVAAVPGMVGGMLLHL. Residues E162, E201, and H204 each coordinate Fe cation. A helical transmembrane segment spans residues 220–240; that stretch reads LLVLAVQGVFFNAFFVLYILS. Fe cation contacts are provided by E252, E303, and H306.

The protein belongs to the alternative oxidase family. Homodimer; disulfide-linked. The cofactor is Fe cation.

Its subcellular location is the mitochondrion inner membrane. The catalysed reaction is 2 a ubiquinol + O2 = 2 a ubiquinone + 2 H2O. Its function is as follows. Catalyzes the cyanide-resistant oxidation of ubiquinol and the reduction of molecular oxygen to water, but does not translocate protons and consequently is not linked to oxidative phosphorylation. May increase respiration when the cytochrome respiratory pathway is restricted, or in response to low temperatures. This chain is Ubiquinol oxidase 2, mitochondrial (AOX2), found in Glycine max (Soybean).